The primary structure comprises 357 residues: Dual-specificity RNA methyltransferase RlmN (357 aa).

The Proton acceptor role is filled by glutamate 89. Residues 109–340 (EGEKYTVCVS…CTIRESKALD (232 aa)) form the Radical SAM core domain. Cysteines 116 and 345 form a disulfide. Cysteine 123, cysteine 127, and cysteine 130 together coordinate [4Fe-4S] cluster. Residues 173-174 (GE), serine 203, 226-228 (SLH), and asparagine 302 contribute to the S-adenosyl-L-methionine site. Catalysis depends on cysteine 345, which acts as the S-methylcysteine intermediate.

This sequence belongs to the radical SAM superfamily. RlmN family. It depends on [4Fe-4S] cluster as a cofactor.

The protein localises to the cytoplasm. It carries out the reaction adenosine(2503) in 23S rRNA + 2 reduced [2Fe-2S]-[ferredoxin] + 2 S-adenosyl-L-methionine = 2-methyladenosine(2503) in 23S rRNA + 5'-deoxyadenosine + L-methionine + 2 oxidized [2Fe-2S]-[ferredoxin] + S-adenosyl-L-homocysteine. The catalysed reaction is adenosine(37) in tRNA + 2 reduced [2Fe-2S]-[ferredoxin] + 2 S-adenosyl-L-methionine = 2-methyladenosine(37) in tRNA + 5'-deoxyadenosine + L-methionine + 2 oxidized [2Fe-2S]-[ferredoxin] + S-adenosyl-L-homocysteine. Functionally, specifically methylates position 2 of adenine 2503 in 23S rRNA and position 2 of adenine 37 in tRNAs. m2A2503 modification seems to play a crucial role in the proofreading step occurring at the peptidyl transferase center and thus would serve to optimize ribosomal fidelity. The polypeptide is Dual-specificity RNA methyltransferase RlmN (Helicobacter pylori (strain P12)).